A 652-amino-acid polypeptide reads, in one-letter code: Phosphomethylpyrimidine synthase (652 aa).

Disordered regions lie at residues 1-45 and 118-166; these read MVSR…SVSA and QRGD…LDGR. The segment covering 8 to 45 has biased composition (low complexity); it reads SSSSTSKAVTSSPSTSSLSSAASSPSVSSSSSSSSVSA. Over residues 134-162 the composition is skewed to gly residues; the sequence is GASGPGTLGSGTPGSGTPGSGPLGLGGTD. Substrate-binding positions include Asn245, Met274, Tyr303, His339, 359–361, 400–403, and Glu439; these read SRG and DGLR. Residue His443 participates in Zn(2+) binding. Substrate is bound at residue Tyr466. His507 provides a ligand contact to Zn(2+). Cys587, Cys590, and Cys595 together coordinate [4Fe-4S] cluster.

Belongs to the ThiC family. [4Fe-4S] cluster serves as cofactor.

The catalysed reaction is 5-amino-1-(5-phospho-beta-D-ribosyl)imidazole + S-adenosyl-L-methionine = 4-amino-2-methyl-5-(phosphooxymethyl)pyrimidine + CO + 5'-deoxyadenosine + formate + L-methionine + 3 H(+). Its pathway is cofactor biosynthesis; thiamine diphosphate biosynthesis. In terms of biological role, catalyzes the synthesis of the hydroxymethylpyrimidine phosphate (HMP-P) moiety of thiamine from aminoimidazole ribotide (AIR) in a radical S-adenosyl-L-methionine (SAM)-dependent reaction. This is Phosphomethylpyrimidine synthase from Frankia casuarinae (strain DSM 45818 / CECT 9043 / HFP020203 / CcI3).